The sequence spans 233 residues: Probable GTP-binding protein EngB (233 aa).

In terms of domain architecture, EngB-type G spans Thr-31–Pro-205. Residues Gly-39 to Ser-46, Gly-66 to Leu-70, Asp-84 to Gly-87, Thr-151 to Asp-154, and Phe-184 to Ser-186 contribute to the GTP site. Positions 46 and 68 each coordinate Mg(2+).

Belongs to the TRAFAC class TrmE-Era-EngA-EngB-Septin-like GTPase superfamily. EngB GTPase family. The cofactor is Mg(2+).

Functionally, necessary for normal cell division and for the maintenance of normal septation. The polypeptide is Probable GTP-binding protein EngB (Photobacterium profundum (strain SS9)).